The sequence spans 498 residues: ATP synthase subunit beta, chloroplastic (498 aa).

ATP is bound at residue 172–179; it reads GGAGVGKT.

Belongs to the ATPase alpha/beta chains family. As to quaternary structure, F-type ATPases have 2 components, CF(1) - the catalytic core - and CF(0) - the membrane proton channel. CF(1) has five subunits: alpha(3), beta(3), gamma(1), delta(1), epsilon(1). CF(0) has four main subunits: a(1), b(1), b'(1) and c(9-12).

It localises to the plastid. The protein localises to the chloroplast thylakoid membrane. It carries out the reaction ATP + H2O + 4 H(+)(in) = ADP + phosphate + 5 H(+)(out). Functionally, produces ATP from ADP in the presence of a proton gradient across the membrane. The catalytic sites are hosted primarily by the beta subunits. This Daucus carota (Wild carrot) protein is ATP synthase subunit beta, chloroplastic.